We begin with the raw amino-acid sequence, 383 residues long: 1-deoxy-D-xylulose 5-phosphate reductoisomerase (383 aa).

The NADPH site is built by threonine 10, glycine 11, serine 12, isoleucine 13, glycine 36, arginine 37, asparagine 38, and asparagine 122. Lysine 123 contacts 1-deoxy-D-xylulose 5-phosphate. NADPH is bound at residue glutamate 124. Aspartate 148 contacts Mn(2+). Residues serine 149, glutamate 150, serine 174, and histidine 197 each contribute to the 1-deoxy-D-xylulose 5-phosphate site. Position 150 (glutamate 150) interacts with Mn(2+). Glycine 203 contributes to the NADPH binding site. Residues serine 210, asparagine 215, lysine 216, and glutamate 219 each contribute to the 1-deoxy-D-xylulose 5-phosphate site. Mn(2+) is bound at residue glutamate 219.

The protein belongs to the DXR family. It depends on Mg(2+) as a cofactor. The cofactor is Mn(2+).

It carries out the reaction 2-C-methyl-D-erythritol 4-phosphate + NADP(+) = 1-deoxy-D-xylulose 5-phosphate + NADPH + H(+). It functions in the pathway isoprenoid biosynthesis; isopentenyl diphosphate biosynthesis via DXP pathway; isopentenyl diphosphate from 1-deoxy-D-xylulose 5-phosphate: step 1/6. In terms of biological role, catalyzes the NADPH-dependent rearrangement and reduction of 1-deoxy-D-xylulose-5-phosphate (DXP) to 2-C-methyl-D-erythritol 4-phosphate (MEP). This Bacillus pumilus (strain SAFR-032) protein is 1-deoxy-D-xylulose 5-phosphate reductoisomerase.